A 636-amino-acid chain; its full sequence is Putative ankyrin repeat protein L766 (636 aa).

11 ANK repeats span residues 63-97, 99-129, 130-159, 161-190, 230-259, 261-284, 322-355, 372-400, 425-455, 517-546, and 548-575; these read NNYL…DYEL, STCH…YIDS, FGNI…FFNC, YYYL…KSNN, FDEK…NYDF, TIIN…YLTD, SRII…KTSI, NPDE…NIPD, DSLE…DTTI, NSIE…NDNN, and LSWA…DIYQ.

This Acanthamoeba polyphaga mimivirus (APMV) protein is Putative ankyrin repeat protein L766.